Consider the following 392-residue polypeptide: Formate-dependent phosphoribosylglycinamide formyltransferase (392 aa).

Residues 15–16 and glutamate 75 each bind N(1)-(5-phospho-beta-D-ribosyl)glycinamide; that span reads EL. Residues arginine 107, lysine 148, 153–158, 188–191, and glutamate 196 contribute to the ATP site; these read SSGKGQ and EEFL. Residues 112–302 form the ATP-grasp domain; sequence DLASEELALL…EFELHLRAVL (191 aa). Residues glutamate 261 and glutamate 273 each coordinate Mg(2+). N(1)-(5-phospho-beta-D-ribosyl)glycinamide contacts are provided by residues aspartate 280, lysine 350, and 357-358; that span reads RR.

It belongs to the PurK/PurT family. Homodimer.

It carries out the reaction N(1)-(5-phospho-beta-D-ribosyl)glycinamide + formate + ATP = N(2)-formyl-N(1)-(5-phospho-beta-D-ribosyl)glycinamide + ADP + phosphate + H(+). The protein operates within purine metabolism; IMP biosynthesis via de novo pathway; N(2)-formyl-N(1)-(5-phospho-D-ribosyl)glycinamide from N(1)-(5-phospho-D-ribosyl)glycinamide (formate route): step 1/1. In terms of biological role, involved in the de novo purine biosynthesis. Catalyzes the transfer of formate to 5-phospho-ribosyl-glycinamide (GAR), producing 5-phospho-ribosyl-N-formylglycinamide (FGAR). Formate is provided by PurU via hydrolysis of 10-formyl-tetrahydrofolate. The sequence is that of Formate-dependent phosphoribosylglycinamide formyltransferase from Prochlorococcus marinus (strain MIT 9303).